The chain runs to 449 residues: Phosphoglucosamine mutase (449 aa).

Catalysis depends on serine 100, which acts as the Phosphoserine intermediate. Mg(2+) is bound by residues serine 100, aspartate 241, aspartate 243, and aspartate 245. Serine 100 is subject to Phosphoserine.

Belongs to the phosphohexose mutase family. It depends on Mg(2+) as a cofactor. Activated by phosphorylation.

It carries out the reaction alpha-D-glucosamine 1-phosphate = D-glucosamine 6-phosphate. Functionally, catalyzes the conversion of glucosamine-6-phosphate to glucosamine-1-phosphate. The sequence is that of Phosphoglucosamine mutase from Caldicellulosiruptor saccharolyticus (strain ATCC 43494 / DSM 8903 / Tp8T 6331).